Reading from the N-terminus, the 166-residue chain is MIALESSQLQLIDKVVHISRVAKVVKGGRRFSFSAIVVVGDGNGRVGFSLGKANEVPEAIRKGMESAKRTMFEVPLVNATIPHEVLGRFGAASVVLKPASAGTGVIAGGAVRAIMEAAGIHNILTKCIGSRNPHNVVKATLEGLRRLRNVELVAKLRGREVHEIRD.

Residues 11-74 form the S5 DRBM domain; that stretch reads LIDKVVHISR…ESAKRTMFEV (64 aa).

This sequence belongs to the universal ribosomal protein uS5 family. Part of the 30S ribosomal subunit. Contacts proteins S4 and S8.

With S4 and S12 plays an important role in translational accuracy. In terms of biological role, located at the back of the 30S subunit body where it stabilizes the conformation of the head with respect to the body. This is Small ribosomal subunit protein uS5 from Syntrophobacter fumaroxidans (strain DSM 10017 / MPOB).